Reading from the N-terminus, the 379-residue chain is UDP-4-amino-4-deoxy-L-arabinose--oxoglutarate aminotransferase (379 aa).

At Lys182 the chain carries N6-(pyridoxal phosphate)lysine.

Belongs to the DegT/DnrJ/EryC1 family. ArnB subfamily. In terms of assembly, homodimer. Requires pyridoxal 5'-phosphate as cofactor.

It catalyses the reaction UDP-4-amino-4-deoxy-beta-L-arabinose + 2-oxoglutarate = UDP-beta-L-threo-pentopyranos-4-ulose + L-glutamate. The protein operates within nucleotide-sugar biosynthesis; UDP-4-deoxy-4-formamido-beta-L-arabinose biosynthesis; UDP-4-deoxy-4-formamido-beta-L-arabinose from UDP-alpha-D-glucuronate: step 2/3. It participates in bacterial outer membrane biogenesis; lipopolysaccharide biosynthesis. Catalyzes the conversion of UDP-4-keto-arabinose (UDP-Ara4O) to UDP-4-amino-4-deoxy-L-arabinose (UDP-L-Ara4N). The modified arabinose is attached to lipid A and is required for resistance to polymyxin and cationic antimicrobial peptides. This is UDP-4-amino-4-deoxy-L-arabinose--oxoglutarate aminotransferase from Salmonella paratyphi A (strain ATCC 9150 / SARB42).